The following is a 340-amino-acid chain: Ephrin-B3 (340 aa).

A signal peptide spans 1–27 (MGPPHSGPGGVRVGALLLLGVLGLVSG). One can recognise an Ephrin RBD domain in the interval 28–167 (LSLEPVYWNS…TRGMKVLLRV (140 aa)). At 28–226 (LSLEPVYWNS…EGPLPPPSMP (199 aa)) the chain is on the extracellular side. Intrachain disulfides connect C62/C104 and C92/C156. Residues 168–225 (GQSPRGGAVPRKPVSEMPMERDRGAAHSLEPGKENLPGDPTSNATSRGAEGPLPPPSM) form a disordered region. Residues 185 to 200 (PMERDRGAAHSLEPGK) show a composition bias toward basic and acidic residues. Residue N210 is glycosylated (N-linked (GlcNAc...) asparagine). The chain crosses the membrane as a helical span at residues 227-247 (AVAGAAGGLALLLLGVAGAGG). At 248 to 340 (AMCWRRRRAK…QSPPNIYYKV (93 aa)) the chain is on the cytoplasmic side. The segment at 254 to 298 (RRAKPSESRHPGPGSFGRGGSLGLGGGGGMGPREAEPGELGIALR) is disordered. Over residues 267–284 (GSFGRGGSLGLGGGGGMG) the composition is skewed to gly residues. At R271 the chain carries Omega-N-methylarginine. Phosphoserine is present on S274. Positions 338-340 (YKV) match the PDZ-binding motif.

This sequence belongs to the ephrin family. As to quaternary structure, interacts with GRIP1 and GRIP2. (Microbial infection) Interacts with nipah virus and hendra virus glycoprotein. Highly expressed in brain; expressed in embryonic floor plate, roof plate and hindbrain segments.

The protein localises to the membrane. Its function is as follows. Cell surface transmembrane ligand for Eph receptors, a family of receptor tyrosine kinases which are crucial for migration, repulsion and adhesion during neuronal, vascular and epithelial development. Binds promiscuously Eph receptors residing on adjacent cells, leading to contact-dependent bidirectional signaling into neighboring cells. The signaling pathway downstream of the receptor is referred to as forward signaling while the signaling pathway downstream of the ephrin ligand is referred to as reverse signaling. May play a pivotal role in forebrain function. Binds to, and induce the collapse of, commissural axons/growth cones in vitro. May play a role in constraining the orientation of longitudinally projecting axons. In terms of biological role, (Microbial infection) Acts as a receptor for nipah virus and hendra virus. The sequence is that of Ephrin-B3 (EFNB3) from Homo sapiens (Human).